The sequence spans 72 residues: Cell division protein ZapB (72 aa).

Positions 1 to 72 form a coiled coil; it reads MSSEILDQLE…RSLLGQIDNV (72 aa).

The protein belongs to the ZapB family. As to quaternary structure, homodimer. The ends of the coiled-coil dimer bind to each other, forming polymers. Interacts with FtsZ.

It is found in the cytoplasm. Functionally, non-essential, abundant cell division factor that is required for proper Z-ring formation. It is recruited early to the divisome by direct interaction with FtsZ, stimulating Z-ring assembly and thereby promoting cell division earlier in the cell cycle. Its recruitment to the Z-ring requires functional FtsA or ZipA. This is Cell division protein ZapB from Actinobacillus succinogenes (strain ATCC 55618 / DSM 22257 / CCUG 43843 / 130Z).